Reading from the N-terminus, the 313-residue chain is Acetaldehyde dehydrogenase (313 aa).

15–18 (SGNI) provides a ligand contact to NAD(+). C133 functions as the Acyl-thioester intermediate in the catalytic mechanism. Residues 164-172 (SAGPGTRAN) and N289 contribute to the NAD(+) site.

Belongs to the acetaldehyde dehydrogenase family.

It carries out the reaction acetaldehyde + NAD(+) + CoA = acetyl-CoA + NADH + H(+). This chain is Acetaldehyde dehydrogenase, found in Rhizobium rhizogenes (strain K84 / ATCC BAA-868) (Agrobacterium radiobacter).